A 284-amino-acid polypeptide reads, in one-letter code: MEMO1 family protein YN1551_0739 (284 aa).

The protein belongs to the MEMO1 family.

The chain is MEMO1 family protein YN1551_0739 from Saccharolobus islandicus (strain Y.N.15.51 / Yellowstone #2) (Sulfolobus islandicus).